A 332-amino-acid polypeptide reads, in one-letter code: 2,3-diketo-L-gulonate reductase (332 aa).

The Proton donor role is filled by histidine 44. NAD(+)-binding positions include isoleucine 168–serine 174, tryptophan 224–lysine 225, and glycine 304–glutamate 306.

It belongs to the LDH2/MDH2 oxidoreductase family. DlgD subfamily. In terms of assembly, homodimer.

Its subcellular location is the cytoplasm. It catalyses the reaction 3-dehydro-L-gulonate + NAD(+) = 2,3-dioxo-L-gulonate + NADH + H(+). The catalysed reaction is 3-dehydro-L-gulonate + NADP(+) = 2,3-dioxo-L-gulonate + NADPH + H(+). In terms of biological role, catalyzes the reduction of 2,3-diketo-L-gulonate in the presence of NADH, to form 3-keto-L-gulonate. This is 2,3-diketo-L-gulonate reductase from Citrobacter koseri (strain ATCC BAA-895 / CDC 4225-83 / SGSC4696).